A 251-amino-acid polypeptide reads, in one-letter code: uncharacterized protein (251 aa).

This sequence belongs to the FAM243 family.

This is an uncharacterized protein from Mus musculus (Mouse).